We begin with the raw amino-acid sequence, 142 residues long: Transcription antitermination protein NusB (142 aa).

It belongs to the NusB family.

In terms of biological role, involved in transcription antitermination. Required for transcription of ribosomal RNA (rRNA) genes. Binds specifically to the boxA antiterminator sequence of the ribosomal RNA (rrn) operons. The sequence is that of Transcription antitermination protein NusB from Persephonella marina (strain DSM 14350 / EX-H1).